The sequence spans 304 residues: NuA3 HAT complex component PDP3 (304 aa).

A PWWP domain is found at 7 to 68; the sequence is TGDLVLCKVG…PSRLKELDQD (62 aa). The disordered stretch occupies residues 145 to 195; the sequence is KKNSISIKEDPEDNQKSNEEESKPNIKPSKKKRPTANSGGKSNSGNKKKVK. A compositionally biased stretch (basic and acidic residues) spans 151–168; sequence IKEDPEDNQKSNEEESKP.

In terms of assembly, component of the NuA3 histone acetyltransferase (HAT) complex. The NuA3 HAT complex has 2 functionally distinct forms that participate in transcription. The NuA3a HAT complex is composed of at least NTO1, SAS3, TAF14, YNG1 and EAF6. The NuA3b HAT complex contains an additional subunit, PDP3.

The protein localises to the nucleus. It is found in the cytoplasm. In terms of biological role, histone-binding component of the NuA3b histone acetyltransferase complex. Targets the NuA3b HAT complex via histone H3K36me3 to the coding regions of actively transcribed genes to coordinate transcription elongation. Stimulates elongation by RNA polymerase II in vitro. The chain is NuA3 HAT complex component PDP3 from Saccharomyces cerevisiae (strain ATCC 204508 / S288c) (Baker's yeast).